Consider the following 487-residue polypeptide: ATP synthase subunit beta (487 aa).

164–171 (GGAGVGKT) is an ATP binding site.

The protein belongs to the ATPase alpha/beta chains family. As to quaternary structure, F-type ATPases have 2 components, CF(1) - the catalytic core - and CF(0) - the membrane proton channel. CF(1) has five subunits: alpha(3), beta(3), gamma(1), delta(1), epsilon(1). CF(0) has four main subunits: a(1), b(1), b'(1) and c(9-12).

It is found in the cellular thylakoid membrane. The enzyme catalyses ATP + H2O + 4 H(+)(in) = ADP + phosphate + 5 H(+)(out). Its function is as follows. Produces ATP from ADP in the presence of a proton gradient across the membrane. The catalytic sites are hosted primarily by the beta subunits. The polypeptide is ATP synthase subunit beta (Synechococcus sp. (strain WH7803)).